A 428-amino-acid chain; its full sequence is 3-phosphoshikimate 1-carboxyvinyltransferase (428 aa).

Residues Lys-21, Ser-22, and Arg-26 each coordinate 3-phosphoshikimate. Lys-21 lines the phosphoenolpyruvate pocket. The phosphoenolpyruvate site is built by Gly-91 and Arg-119. Residues Ser-164, Gln-166, Asp-313, and Lys-340 each contribute to the 3-phosphoshikimate site. Gln-166 serves as a coordination point for phosphoenolpyruvate. Asp-313 serves as the catalytic Proton acceptor. 2 residues coordinate phosphoenolpyruvate: Arg-344 and Arg-386.

This sequence belongs to the EPSP synthase family. Monomer.

The protein localises to the cytoplasm. The catalysed reaction is 3-phosphoshikimate + phosphoenolpyruvate = 5-O-(1-carboxyvinyl)-3-phosphoshikimate + phosphate. It participates in metabolic intermediate biosynthesis; chorismate biosynthesis; chorismate from D-erythrose 4-phosphate and phosphoenolpyruvate: step 6/7. Functionally, catalyzes the transfer of the enolpyruvyl moiety of phosphoenolpyruvate (PEP) to the 5-hydroxyl of shikimate-3-phosphate (S3P) to produce enolpyruvyl shikimate-3-phosphate and inorganic phosphate. This is 3-phosphoshikimate 1-carboxyvinyltransferase from Campylobacter jejuni subsp. jejuni serotype O:2 (strain ATCC 700819 / NCTC 11168).